A 327-amino-acid chain; its full sequence is Biotin synthase (327 aa).

The 228-residue stretch at 51-278 folds into the Radical SAM core domain; the sequence is QTIQLSTLMS…KSYVRLSAGR (228 aa). [4Fe-4S] cluster is bound by residues Cys-66, Cys-70, and Cys-73. Residues Cys-110, Cys-141, Cys-201, and Arg-273 each contribute to the [2Fe-2S] cluster site.

The protein belongs to the radical SAM superfamily. Biotin synthase family. Homodimer. Requires [4Fe-4S] cluster as cofactor. [2Fe-2S] cluster serves as cofactor.

It catalyses the reaction (4R,5S)-dethiobiotin + (sulfur carrier)-SH + 2 reduced [2Fe-2S]-[ferredoxin] + 2 S-adenosyl-L-methionine = (sulfur carrier)-H + biotin + 2 5'-deoxyadenosine + 2 L-methionine + 2 oxidized [2Fe-2S]-[ferredoxin]. Its pathway is cofactor biosynthesis; biotin biosynthesis; biotin from 7,8-diaminononanoate: step 2/2. In terms of biological role, catalyzes the conversion of dethiobiotin (DTB) to biotin by the insertion of a sulfur atom into dethiobiotin via a radical-based mechanism. The chain is Biotin synthase from Histophilus somni (strain 2336) (Haemophilus somnus).